The chain runs to 75 residues: Peptide Ctri9610 (75 aa).

Residues 1 to 22 (MNSKYLFVFLILNVIFIDLCQG) form the signal peptide. Lysine 41 bears the Lysine amide mark. Positions 42-75 (GTRRRELGSQYDYLQDFRKRELDLDDLLSKFPDY) are excised as a propeptide.

Belongs to the non-disulfide-bridged peptide (NDBP) superfamily. Short antimicrobial peptide (group 4) family. As to expression, expressed by the venom gland.

It localises to the secreted. The chain is Peptide Ctri9610 from Chaerilus tricostatus (Scorpion).